The sequence spans 343 residues: Membrane progestin receptor delta (343 aa).

Residues 1–49 (MLSLKMPQLLRVHQVPRVFWEEGIMSGYRCPTSSALDCVLSSFQMTNET) are Cytoplasmic-facing. The chain crosses the membrane as a helical span at residues 50–70 (VNIWTHFLPTWYFLWRLLALG). Topologically, residues 71 to 79 (SPGFRADPY) are extracellular. A helical transmembrane segment spans residues 80–100 (HLPLLVFLLPACLYPFASCCA). Residues 101–112 (HTFSSMSPRARH) lie on the Cytoplasmic side of the membrane. The helical transmembrane segment at 113–133 (ICYFLDYGALSLYSLGCAFPY) threads the bilayer. Topologically, residues 134–146 (AAYSMPASWLHSR) are extracellular. Residues 147-167 (LHQLFVPAAALNSFLCTGLSC) traverse the membrane as a helical segment. Over 168-216 (YSRFPELEYPGFSKALRTAAFAYPFLFDNLPLFYRLRLCWGGAHSCGRD) the chain is Cytoplasmic. Residues 217 to 237 (ALSSNHGYHLLCALLSGFLFA) traverse the membrane as a helical segment. Residues 238–257 (ARLPERLAPGRFDYIGHSHQ) lie on the Extracellular side of the membrane. Residues 258–278 (LFHICAVLGTHFQLEAVLADM) form a helical membrane-spanning segment. The Cytoplasmic portion of the chain corresponds to 279 to 291 (GSRRAWLAVQEPT). Residues 292-312 (LGLGATVATLSLAVIGNLFII) form a helical membrane-spanning segment. Residues 313–343 (AAFTASLLRMPGPCPLLQGSPLEEGLQAKQQ) lie on the Extracellular side of the membrane.

It belongs to the ADIPOR family. In terms of assembly, homodimer.

It localises to the cell membrane. In terms of biological role, plasma membrane progesterone (P4) receptor coupled to G proteins. Seems to act through a G(s) mediated pathway. Involved in neurosteroid inhibition of apoptosis. May be involved in regulating rapid P4 signaling in the nervous system. Also binds dehydroepiandrosterone (DHEA), pregnanolone, pregnenolone and allopregnanolone. The sequence is that of Membrane progestin receptor delta from Mus musculus (Mouse).